The sequence spans 145 residues: NADH-quinone oxidoreductase subunit A (145 aa).

3 helical membrane passes run 14–34, 66–86, and 96–116; these read FAVFLLSALGLCVFMLTGGFL, FYLVAMFFVIFDVETLYLYAW, and VGFIEATIFILILLAGLVYLV.

It belongs to the complex I subunit 3 family. NDH-1 is composed of 13 different subunits. Subunits NuoA, H, J, K, L, M, N constitute the membrane sector of the complex.

The protein resides in the cell inner membrane. The catalysed reaction is a quinone + NADH + 5 H(+)(in) = a quinol + NAD(+) + 4 H(+)(out). Functionally, NDH-1 shuttles electrons from NADH, via FMN and iron-sulfur (Fe-S) centers, to quinones in the respiratory chain. The immediate electron acceptor for the enzyme in this species is believed to be ubiquinone. Couples the redox reaction to proton translocation (for every two electrons transferred, four hydrogen ions are translocated across the cytoplasmic membrane), and thus conserves the redox energy in a proton gradient. The protein is NADH-quinone oxidoreductase subunit A of Sodalis glossinidius (strain morsitans).